We begin with the raw amino-acid sequence, 84 residues long: Exendin-2-long (84 aa).

An N-terminal signal peptide occupies residues 1 to 23 (MKSILWLCVFGLLIATLFPVSWQ). A propeptide spanning residues 24-44 (MAIKSRLSSEDSETDQRLFES) is cleaved from the precursor.

Belongs to the glucagon family. Post-translationally, an amidated Pro-81 is described. Such an amidation is however not compatible with the sequence displayed. Indeed cDNAs do not encode a Gly that could serve as substrate for peptide alpha-amidation. Expressed by the venom gland. Not expressed in the pancreas, liver, stomach, small intestine, lung, heart, kidney, spleen, ovary, and brain.

The protein resides in the secreted. Has vasoactive intestinal peptide(VIP)/secretin-like biological activity. Interacts with rat and human VIP receptors 1 (VIPR1) and 2 (VIPR2), with the highest affinity for the human VIPR2. Induces hypotension that is mediated by relaxation of cardiac smooth muscle. This vasodilation may not be transduced by VIP or PACAP receptors. The polypeptide is Exendin-2-long (Heloderma suspectum (Gila monster)).